The sequence spans 341 residues: HTH-type transcriptional repressor PurR (341 aa).

The region spanning 2–56 is the HTH lacI-type domain; that stretch reads ATIKDVAKRAGVSTTTVSHVINKTRFVAEETKAAVGAAIKELHYSPSAVARSLKV. A DNA-binding region (H-T-H motif) is located at residues 4–23; the sequence is IKDVAKRAGVSTTTVSHVIN. The DNA-binding element occupies 48–56; sequence SAVARSLKV. 5 residues coordinate hypoxanthine: tyrosine 73, arginine 190, threonine 192, phenylalanine 221, and aspartate 275.

Homodimer.

Its pathway is purine metabolism; purine nucleotide biosynthesis [regulation]. Is the main repressor of the genes involved in the de novo synthesis of purine nucleotides, regulating purB, purC, purEK, purF, purHD, purL, purMN and guaBA expression. PurR is allosterically activated to bind its cognate DNA by binding the purine corepressors, hypoxanthine or guanine, thereby effecting transcription repression. In Serratia proteamaculans (strain 568), this protein is HTH-type transcriptional repressor PurR.